A 944-amino-acid polypeptide reads, in one-letter code: Tyrosine-protein kinase transmembrane receptor ROR2 (944 aa).

Positions 1–33 are cleaved as a signal peptide; the sequence is MARGWVRPSRVPLCARAVWTAAALLLWTPWTAG. The Extracellular portion of the chain corresponds to 34-403; sequence EVEDSEAIDT…CSPRDGSKMG (370 aa). The Ig-like C2-type domain maps to 55–145; it reads PTLKGYFLNF…VATNGLKTIT (91 aa). A glycan (N-linked (GlcNAc...) asparagine) is linked at Asn70. Intrachain disulfides connect Cys83/Cys135, Cys174/Cys239, Cys182/Cys232, Cys223/Cys264, Cys252/Cys300, Cys256/Cys286, Cys316/Cys394, Cys337/Cys377, and Cys365/Cys389. The FZ domain occupies 169-303; it reads QEDGFCQPYR…SPDAANCMRI (135 aa). Asn188 carries an N-linked (GlcNAc...) asparagine glycan. The 79-residue stretch at 316 to 394 folds into the Kringle domain; that stretch reads CYNGSGADYR…RVELCDVPPC (79 aa). Residue Asn318 is glycosylated (N-linked (GlcNAc...) asparagine). The helical transmembrane segment at 404-424 threads the bilayer; that stretch reads ILYILVPSIAIPLVIACLFFL. Topologically, residues 425-944 are cytoplasmic; it reads VCMCRNKQKA…TEAAHVQLEA (520 aa). Residues 473 to 746 enclose the Protein kinase domain; sequence VRFMEELGED…PRFKDIHSRL (274 aa). ATP-binding positions include 479–487 and Lys507; that span reads LGEDRFGKV. The Proton acceptor role is filled by Asp615. Tyr646 is modified (phosphotyrosine; by autocatalysis). Residues 757 to 779 form a disordered region; sequence SSAQTSGASNTTQTSSLSTSPVS. Positions 765 to 779 are enriched in low complexity; sequence SNTTQTSSLSTSPVS. Arg785 bears the Asymmetric dimethylarginine mark. 2 disordered regions span residues 850 to 879 and 898 to 929; these read QVPP…TAPS and QNIA…LGDN. Positions 857–872 are enriched in low complexity; the sequence is PKPSSHHSGSGSTSTG.

Belongs to the protein kinase superfamily. Tyr protein kinase family. ROR subfamily. In terms of assembly, homodimer; promotes osteogenesis. Binds YWHAB. Interacts with WTIP. Interacts with ROR2. Requires Mg(2+) as cofactor.

It localises to the cell membrane. The enzyme catalyses L-tyrosyl-[protein] + ATP = O-phospho-L-tyrosyl-[protein] + ADP + H(+). Tyrosine-protein kinase receptor which may be involved in the early formation of the chondrocytes. It seems to be required for cartilage and growth plate development. Phosphorylates YWHAB, leading to induction of osteogenesis and bone formation. In contrast, has also been shown to have very little tyrosine kinase activity in vitro. May act as a receptor for wnt ligand WNT5A which may result in the inhibition of WNT3A-mediated signaling. In Mus musculus (Mouse), this protein is Tyrosine-protein kinase transmembrane receptor ROR2 (Ror2).